The following is a 367-amino-acid chain: Putative F-box protein At3g21120 (367 aa).

The F-box domain occupies methionine 1 to histidine 43.

The protein is Putative F-box protein At3g21120 of Arabidopsis thaliana (Mouse-ear cress).